The sequence spans 385 residues: Fe-S cluster assembly protein DRE2 (385 aa).

Positions 1 to 177 (MTSSINILLL…KKLNKNDMTI (177 aa)) are N-terminal SAM-like domain. Residues 178–240 (NVPQEIDNIT…NDLLKYNNHN (63 aa)) are linker. A disordered region spans residues 200 to 226 (YFSSDDENSSDGSLSDNANEEEEDDDE). Positions 217–226 (ANEEEEDDDE) are enriched in acidic residues. Residues Cys261, Cys275, Cys278, and Cys280 each coordinate [2Fe-2S] cluster. The tract at residues 261–280 (CELSLNGGKKRKKACKDCTC) is fe-S binding site A. Positions 348, 351, 359, and 362 each coordinate [4Fe-4S] cluster. 2 consecutive short sequence motifs (cx2C motif) follow at residues 348–351 (CGSC) and 359–362 (CDGC). The segment at 348–362 (CGSCALGDAFRCDGC) is fe-S binding site B.

It belongs to the anamorsin family. In terms of assembly, monomer. Interacts with TAH18. Interacts with MIA40. Requires [2Fe-2S] cluster as cofactor. The cofactor is [4Fe-4S] cluster.

The protein localises to the cytoplasm. It localises to the mitochondrion intermembrane space. Functionally, component of the cytosolic iron-sulfur (Fe-S) protein assembly (CIA) machinery required for the maturation of extramitochondrial Fe-S proteins. Part of an electron transfer chain functioning in an early step of cytosolic Fe-S biogenesis, facilitating the de novo assembly of a [4Fe-4S] cluster on the scaffold complex CFD1-NBP35. Electrons are transferred to DRE2 from NADPH via the FAD- and FMN-containing protein TAH18. TAH18-DRE2 are also required for the assembly of the diferric tyrosyl radical cofactor of ribonucleotide reductase (RNR), probably by providing electrons for reduction during radical cofactor maturation in the catalytic small subunit RNR2. In Candida dubliniensis (strain CD36 / ATCC MYA-646 / CBS 7987 / NCPF 3949 / NRRL Y-17841) (Yeast), this protein is Fe-S cluster assembly protein DRE2.